Consider the following 359-residue polypeptide: Heme A synthase (359 aa).

A run of 5 helical transmembrane segments spans residues 8–28, 94–114, 124–144, 159–179, and 215–235; these read IMSIWLIVSTLLLLLMIVVGG, LLGRITGIIIIIPFLIFYYLK, LLLITCLVIIQGFMGWYMVKS, GHLLLAVVIYHQLIAELLIII, and IIIFLLYTQIMFGALVAGLDA. Position 274 (His274) interacts with heme. 3 helical membrane-spanning segments follow: residues 276–296, 303–323, and 328–348; these read WFGILISCLIICYAIWLIILN, MGMVAACLVLVQVTTGIITLV, and ILAALTHQVGAILILTTFLFI. His334 contributes to the heme binding site.

The protein belongs to the COX15/CtaA family. Type 2 subfamily. In terms of assembly, interacts with CtaB. Heme b serves as cofactor.

Its subcellular location is the cell membrane. The catalysed reaction is Fe(II)-heme o + 2 A + H2O = Fe(II)-heme a + 2 AH2. It functions in the pathway porphyrin-containing compound metabolism; heme A biosynthesis; heme A from heme O: step 1/1. Catalyzes the conversion of heme O to heme A by two successive hydroxylations of the methyl group at C8. The first hydroxylation forms heme I, the second hydroxylation results in an unstable dihydroxymethyl group, which spontaneously dehydrates, resulting in the formyl group of heme A. This chain is Heme A synthase, found in Orientia tsutsugamushi (strain Ikeda) (Rickettsia tsutsugamushi).